A 427-amino-acid polypeptide reads, in one-letter code: Glucose-6-phosphate isomerase (427 aa).

The active-site Proton donor is the E281. Catalysis depends on residues H302 and K417.

Belongs to the GPI family.

It is found in the cytoplasm. It catalyses the reaction alpha-D-glucose 6-phosphate = beta-D-fructose 6-phosphate. It participates in carbohydrate biosynthesis; gluconeogenesis. The protein operates within carbohydrate degradation; glycolysis; D-glyceraldehyde 3-phosphate and glycerone phosphate from D-glucose: step 2/4. Catalyzes the reversible isomerization of glucose-6-phosphate to fructose-6-phosphate. This chain is Glucose-6-phosphate isomerase, found in Mycoplasmopsis pulmonis (strain UAB CTIP) (Mycoplasma pulmonis).